We begin with the raw amino-acid sequence, 312 residues long: Pantothenate kinase (312 aa).

97–104 (GSVAVGKS) is a binding site for ATP.

Belongs to the prokaryotic pantothenate kinase family.

It is found in the cytoplasm. The catalysed reaction is (R)-pantothenate + ATP = (R)-4'-phosphopantothenate + ADP + H(+). The protein operates within cofactor biosynthesis; coenzyme A biosynthesis; CoA from (R)-pantothenate: step 1/5. This chain is Pantothenate kinase, found in Mycobacterium marinum (strain ATCC BAA-535 / M).